Consider the following 647-residue polypeptide: MNAHVEQLEFQAEARQLLDLMVHSVYSNKDAFLRELISNASDALDKLRIEALRNKDLEVDTSDLHIEIDADKAARTLTVRDNGIGMAREEVVDLIGTLAKSGTAELRAQLREAKNAAASEELIGQFGIGFYSSFMVADKVQLLTRKAGESAATRWESSGEGTYTIESVEDAPQGTSVTLHLKPEDAEDDLHDYTSEWKIRNLVKKYSDFIAWPIRMDVERRTPASQEEGGEGGEETVTIETETLNSMKALWARPKEEVSEQEYKEFYKHVAHAWDDPLEIIAMKAEGTFEYQALLFIPSHAPFDLFDRDAHVGIQLYVKRVFIMGDCDQLMPEYLRFVKGVVDAQDMSLNVSREILQQDRQIKAIRRRLTKKVLSTIKDVQSSRPEDYRTFWTQFGRVLKEGLLSDIDNRETLLGISSFVSTYSEEEPTTLAEYVERMKDGQQQIFYATGETRQQLLKSPHLEAFKAKGYEVLLLTDPVDEVWVGMVPEFDGKPLQSVAKGEVDLSSEEDTSEAEREERQKEFADLLTWLQETLSDHVKEVRLSTRLTESPACLITDAFGMTPALARIYRASGQEVPVGKRILELNPSHPLVTGLRQAHQDRADDAEKSLAETAELLYGTALLAEGGALEDPARFAELLAERLARTL.

An a; substrate-binding region spans residues 1-353 (MNAHVEQLEF…AQDMSLNVSR (353 aa)). Residues 354–567 (EILQQDRQIK…AFGMTPALAR (214 aa)) form a b region. The interval 568 to 647 (IYRASGQEVP…LLAERLARTL (80 aa)) is c.

The protein belongs to the heat shock protein 90 family. In terms of assembly, homodimer.

It is found in the cytoplasm. Its function is as follows. Molecular chaperone. Has ATPase activity. This is Chaperone protein HtpG from Mycobacterium bovis (strain ATCC BAA-935 / AF2122/97).